The following is an 89-amino-acid chain: Small ribosomal subunit protein uS15 (89 aa).

This sequence belongs to the universal ribosomal protein uS15 family. In terms of assembly, part of the 30S ribosomal subunit. Forms a bridge to the 50S subunit in the 70S ribosome, contacting the 23S rRNA.

One of the primary rRNA binding proteins, it binds directly to 16S rRNA where it helps nucleate assembly of the platform of the 30S subunit by binding and bridging several RNA helices of the 16S rRNA. In terms of biological role, forms an intersubunit bridge (bridge B4) with the 23S rRNA of the 50S subunit in the ribosome. The chain is Small ribosomal subunit protein uS15 from Pseudomonas fluorescens (strain SBW25).